The chain runs to 1107 residues: Unconventional myosin-Ie (1107 aa).

Residues 19–692 enclose the Myosin motor domain; that stretch reads SGVDDMVLLS…SLFLLEEMRE (674 aa). 112–119 is a binding site for ATP; the sequence is GESGAGKT. The actin-binding stretch occupies residues 581–591; sequence PHYIRCIKPNE. The 30-residue stretch at 695-724 folds into the IQ domain; the sequence is YDGYARVIQKTWRKFVARKKYVQMREEASD. A TH1 domain is found at 730 to 922; sequence KERRRNSINR…NKVLQVSIGP (193 aa). Residues 919–1052 form a disordered region; that stretch reads SIGPGLPKNS…KPQPKPKPQV (134 aa). 2 stretches are compositionally biased toward polar residues: residues 979–989 and 998–1012; these read NQRSNQKSLYT and RQQS…QTPE. Phosphoserine is present on serine 1001. Residues 1034–1051 are compositionally biased toward pro residues; the sequence is RPPPAGGRPKPQPKPKPQ. In terms of domain architecture, SH3 spans 1050–1107; sequence PQVPQCKALYAYDAQDTDELSFNANDIIDIIKEDPSGWWTGRLRGKQGLFPNNYVTKI.

The protein belongs to the TRAFAC class myosin-kinesin ATPase superfamily. Myosin family. Interacts with CALM and F-actin. Interacts (via SH3 domain) with SYNJ1, DNM1 and DNM2. Interacts with ARL14EP. Interacts with CARMIL1. In terms of tissue distribution, detected in kidney glomeruli (at protein level). Detected in utricle.

It localises to the cytoplasm. The protein localises to the cell junction. The protein resides in the cytoplasmic vesicle. Its subcellular location is the clathrin-coated vesicle. It is found in the cytoskeleton. In terms of biological role, myosins are actin-based motor molecules with ATPase activity. Unconventional myosins serve in intracellular movements. Their highly divergent tails bind to membranous compartments, which are then moved relative to actin filaments. Binds to membranes containing anionic phospholipids via its tail domain. Involved in clathrin-mediated endocytosis and intracellular movement of clathrin-coated vesicles. Required for normal morphology of the glomerular basement membrane, normal development of foot processes by kidney podocytes and normal kidney function. In dendritic cells, may control the movement of class II-containing cytoplasmic vesicles along the actin cytoskeleton by connecting them with the actin network via ARL14EP and ARL14. The sequence is that of Unconventional myosin-Ie (Myo1e) from Mus musculus (Mouse).